Here is a 268-residue protein sequence, read N- to C-terminus: Microtubule-associated protein RP/EB family member 1 (268 aa).

The residue at position 2 (A2) is an N-acetylalanine. Positions 14–116 (NLSRHDMLAW…FVQWFKKFFD (103 aa)) constitute a Calponin-homology (CH) domain. N6-crotonyllysine is present on K66. Y124 bears the Phosphotyrosine mark. Residues 124-268 (YDPVAARQGQ…GGPQEEQEEY (145 aa)) are interaction with MTUS2/TIP150. The span at 147–160 (NKPKKPLSSSSAAP) shows a compositional bias: low complexity. The segment at 147 to 184 (NKPKKPLSSSSAAPQRPITTHRTTATPKAGPGVVRKNP) is disordered. A Phosphoserine modification is found at S155. The segment covering 163-172 (PITTHRTTAT) has biased composition (polar residues). Residues 185 to 255 (GVGNGDDEAA…LYATDEGFVI (71 aa)) form the EB1 C-terminal domain. Residues 185–268 (GVGNGDDEAA…GGPQEEQEEY (84 aa)) form an interaction with CDK5RAP2 region. Positions 206-211 (TVEDLE) are interaction with APC. The tract at residues 208 to 268 (EDLEKERDFY…GGPQEEQEEY (61 aa)) is DCTN1-binding. The residue at position 220 (K220) is an N6-acetyllysine. The tract at residues 220–242 (KLRNIELICQENEGENNPVLQRI) is APC-binding. Positions 232-255 (EGENNPVLQRIVDILYATDEGFVI) are interaction with SKA1.

Belongs to the MAPRE family. As to quaternary structure, homodimer. Heterodimer with MAPRE3. Interacts with DCTN1, DCTN2, TERF1 and dynein intermediate chain. Interaction with DIAPH1 and DIAPH2. Interacts (via C-terminal residues 206-211) with APC (via C-terminal residues 2674-2845); the interaction inhibits association with and bundling of F-actin. Interacts with CLASP2, DST, KIF2C and STIM1; probably required for their targeting to the growing microtubule plus ends. Interacts with MTUS2; interaction is direct and probably targets MTUS2 to microtubules. Interacts (via C-terminus) with SKA1 (via SXIP motif); the interaction is direct and stabilizes the kinetochore-microtubule attachment of the SKA1 complex. Interacts with APC2. Interacts with CLASP1. Interacts with CDK5RAP2. Interacts with MACF1. Interacts with RABL2/RABL2A; binds preferentially to GTP-bound RABL2. Interacts with KCNAB2. Interacts (via C-terminus) with CLIP1. Interacts with SLAIN2 and SLAIN1. Interacts with KIF18B; this interaction is required for efficient accumulation of KIF18B at microtubule plus ends. Interacts with MISP. Interacts with KNSTRN. Interacts with NCKAP5L. Interacts with CAMSAP2. Interacts with PDE4DIP isoform 13/MMG8/SMYLE; this interaction is required for its recruitment to the Golgi apparatus. Forms a pericentrosomal complex with AKAP9, CDK5RAP2 and PDE4DIP isoform 13/MMG8/SMYLE; within this complex, MAPRE1 binding to CDK5RAP2 may be mediated by PDE4DIP. Interacts with AKNA. Interacts with GAS2L1, GAS2L2, and GAS2L3. Post-translationally, acetylation at Lys-220 by KAT2B/PCAF promotes dynamic kinetochore-microtubule interactions in early mitosis. Crotonylated by KAT5 during mitosis, promoting astral microtubule plasticity and dynamic connection between astral microtubules and the cortex during mitotic chromosome segregation, thereby ensuring accurate spindle positioning in mitosis. Decrotonylated by HDAC3.

It is found in the cytoplasm. It localises to the cytoskeleton. Its subcellular location is the microtubule organizing center. The protein localises to the centrosome. The protein resides in the golgi apparatus. It is found in the spindle. It localises to the spindle pole. Functionally, plus-end tracking protein (+TIP) that binds to the plus-end of microtubules and regulates the dynamics of the microtubule cytoskeleton. Recruits other +TIP proteins to microtubules by binding to a conserved Ser-X-Leu-Pro (SXLP) motif in their polypeptide chains. Promotes cytoplasmic microtubule nucleation and elongation. Involved in mitotic spindle positioning by stabilizing microtubules and promoting dynamic connection between astral microtubules and the cortex during mitotic chromosome segregation. Assists chromosome alignment in metaphase by recruiting the SKA complex to the spindle and stabilizing its interactions with microtubule bundles (K-fibers). Also acts as a regulator of minus-end microtubule organization: interacts with the complex formed by AKAP9 and PDE4DIP, leading to recruit CAMSAP2 to the Golgi apparatus, thereby tethering non-centrosomal minus-end microtubules to the Golgi, an important step for polarized cell movement. Promotes elongation of CAMSAP2-decorated microtubule stretches on the minus-end of microtubules. Acts as a regulator of autophagosome transport via interaction with CAMSAP2. Functions downstream of Rho GTPases and DIAPH1 in stable microtubule formation. May play a role in cell migration. The polypeptide is Microtubule-associated protein RP/EB family member 1 (MAPRE1) (Bos taurus (Bovine)).